A 354-amino-acid polypeptide reads, in one-letter code: Sulfate/thiosulfate import ATP-binding protein CysA (354 aa).

Positions 3–237 constitute an ABC transporter domain; sequence IEVRGLSKRF…PATPFVYGFL (235 aa). 35–42 provides a ligand contact to ATP; sequence GPSGCGKT.

Belongs to the ABC transporter superfamily. Sulfate/tungstate importer (TC 3.A.1.6) family. In terms of assembly, the complex is composed of two ATP-binding proteins (CysA), two transmembrane proteins (CysT and CysW) and a solute-binding protein (CysP).

Its subcellular location is the cell inner membrane. It catalyses the reaction sulfate(out) + ATP + H2O = sulfate(in) + ADP + phosphate + H(+). It carries out the reaction thiosulfate(out) + ATP + H2O = thiosulfate(in) + ADP + phosphate + H(+). Part of the ABC transporter complex CysAWTP involved in sulfate/thiosulfate import. Responsible for energy coupling to the transport system. In Bordetella parapertussis (strain 12822 / ATCC BAA-587 / NCTC 13253), this protein is Sulfate/thiosulfate import ATP-binding protein CysA.